Reading from the N-terminus, the 243-residue chain is Pyridoxine 5'-phosphate synthase (243 aa).

Residue asparagine 9 coordinates 3-amino-2-oxopropyl phosphate. 11–12 provides a ligand contact to 1-deoxy-D-xylulose 5-phosphate; it reads DH. Arginine 20 serves as a coordination point for 3-amino-2-oxopropyl phosphate. Catalysis depends on histidine 45, which acts as the Proton acceptor. The 1-deoxy-D-xylulose 5-phosphate site is built by arginine 47 and histidine 52. The active-site Proton acceptor is the glutamate 72. Threonine 102 lines the 1-deoxy-D-xylulose 5-phosphate pocket. The active-site Proton donor is histidine 193. Residues glycine 194 and 215–216 contribute to the 3-amino-2-oxopropyl phosphate site; that span reads GH.

The protein belongs to the PNP synthase family. As to quaternary structure, homooctamer; tetramer of dimers.

It localises to the cytoplasm. It carries out the reaction 3-amino-2-oxopropyl phosphate + 1-deoxy-D-xylulose 5-phosphate = pyridoxine 5'-phosphate + phosphate + 2 H2O + H(+). The protein operates within cofactor biosynthesis; pyridoxine 5'-phosphate biosynthesis; pyridoxine 5'-phosphate from D-erythrose 4-phosphate: step 5/5. In terms of biological role, catalyzes the complicated ring closure reaction between the two acyclic compounds 1-deoxy-D-xylulose-5-phosphate (DXP) and 3-amino-2-oxopropyl phosphate (1-amino-acetone-3-phosphate or AAP) to form pyridoxine 5'-phosphate (PNP) and inorganic phosphate. This chain is Pyridoxine 5'-phosphate synthase, found in Aliivibrio fischeri (strain ATCC 700601 / ES114) (Vibrio fischeri).